The following is a 135-amino-acid chain: Beta-galactoside-binding lectin (135 aa).

An N-acetylserine modification is found at Ser2. A disulfide bridge links Cys3 with Cys8. The Galectin domain occupies Gly5–Glu135. Residues His46–Arg50, His54, Asn63, Trp70–Glu73, and Trp70–Glu76 contribute to the a beta-D-galactoside site.

As to quaternary structure, homodimer; disulfide-linked. In terms of assembly, (Microbial infection) Interacts with newcastle disease virus protein HN; this interaction inhibits viral adsorption rather than internalization. As to expression, mainly in the intestine (adult), mainly in the skin (embryo).

Its function is as follows. This protein binds beta-galactoside. May participate in host antiviral defense through specific interaction with glycans on the viral envelope glycoproteins. The sequence is that of Beta-galactoside-binding lectin (CG-1B) from Gallus gallus (Chicken).